A 288-amino-acid polypeptide reads, in one-letter code: 6-phospho-5-dehydro-2-deoxy-D-gluconate aldolase (288 aa).

The active-site Proton donor is aspartate 85. Positions 86 and 180 each coordinate Zn(2+). A dihydroxyacetone phosphate-binding site is contributed by glycine 181. Histidine 208 serves as a coordination point for Zn(2+). Dihydroxyacetone phosphate contacts are provided by residues 209–211 (GGS) and 230–233 (NVNT). The residue at position 233 (threonine 233) is a Phosphothreonine.

The protein belongs to the class II fructose-bisphosphate aldolase family. IolJ subfamily. Requires Zn(2+) as cofactor.

It catalyses the reaction 6-phospho-5-dehydro-2-deoxy-D-gluconate = 3-oxopropanoate + dihydroxyacetone phosphate. It functions in the pathway polyol metabolism; myo-inositol degradation into acetyl-CoA; acetyl-CoA from myo-inositol: step 6/7. Its function is as follows. Produces dihydroxyacetone phosphate (DHAP or glycerone phosphate) and malonic semialdehyde (MSA or 3-oxopropanoate) from 6-phospho-5-dehydro-2-deoxy-D-gluconate (DKGP). This is 6-phospho-5-dehydro-2-deoxy-D-gluconate aldolase (iolJ) from Halalkalibacterium halodurans (strain ATCC BAA-125 / DSM 18197 / FERM 7344 / JCM 9153 / C-125) (Bacillus halodurans).